Reading from the N-terminus, the 125-residue chain is Splicing factor 3B subunit 6 (125 aa).

Residues 16–29 (EVNRILYIRNLPYK) form an interaction with pre-mRNA branch site region. One can recognise an RRM domain in the interval 19–94 (RILYIRNLPY…RYLVVLYYNA (76 aa)). The residue at position 29 (Lys-29) is an N6-acetyllysine; alternate. Lys-29 is covalently cross-linked (Glycyl lysine isopeptide (Lys-Gly) (interchain with G-Cter in SUMO2); alternate). N6-acetyllysine is present on Lys-41.

Component of the 17S U2 SnRNP complex, a ribonucleoprotein complex that contains small nuclear RNA (snRNA) U2 and a number of specific proteins. Part of the SF3B subcomplex of the 17S U2 SnRNP complex. SF3B associates with the splicing subcomplex SF3A and a 12S RNA unit to form the U2 small nuclear ribonucleoproteins complex (U2 snRNP). Within the SF3B complex interacts directly with SF3B1. Component of the minor spliceosome, which splices U12-type introns.

Its subcellular location is the nucleus. Its function is as follows. Component of the 17S U2 SnRNP complex of the spliceosome, a large ribonucleoprotein complex that removes introns from transcribed pre-mRNAs. The 17S U2 SnRNP complex (1) directly participates in early spliceosome assembly and (2) mediates recognition of the intron branch site during pre-mRNA splicing by promoting the selection of the pre-mRNA branch-site adenosine, the nucleophile for the first step of splicing. Within the 17S U2 SnRNP complex, SF3B6 is part of the SF3B subcomplex, which is required for 'A' complex assembly formed by the stable binding of U2 snRNP to the branchpoint sequence in pre-mRNA. Sequence independent binding of SF3A and SF3B subcomplexes upstream of the branch site is essential, it may anchor U2 snRNP to the pre-mRNA. Within the 17S U2 SnRNP complex, SF3B6 directly contacts the pre-mRNA branch site adenosine for the first catalytic step of splicing. SF3B6 stabilizes the intron branch site-U2 snRNA duplex, thereby promoting-binding of introns with poor sequence complementarity. Also acts as a component of the minor spliceosome, which is involved in the splicing of U12-type introns in pre-mRNAs. The sequence is that of Splicing factor 3B subunit 6 (Sf3b6) from Mus musculus (Mouse).